Reading from the N-terminus, the 206-residue chain is Large ribosomal subunit protein uL4 (206 aa).

The segment at 63-85 is disordered; the sequence is MYKQKGTGSARHGSARAPQFRGG.

This sequence belongs to the universal ribosomal protein uL4 family. As to quaternary structure, part of the 50S ribosomal subunit.

Its function is as follows. One of the primary rRNA binding proteins, this protein initially binds near the 5'-end of the 23S rRNA. It is important during the early stages of 50S assembly. It makes multiple contacts with different domains of the 23S rRNA in the assembled 50S subunit and ribosome. Forms part of the polypeptide exit tunnel. The polypeptide is Large ribosomal subunit protein uL4 (Beijerinckia indica subsp. indica (strain ATCC 9039 / DSM 1715 / NCIMB 8712)).